The primary structure comprises 882 residues: Alanine--tRNA ligase (882 aa).

4 residues coordinate Zn(2+): histidine 568, histidine 572, cysteine 670, and histidine 674.

It belongs to the class-II aminoacyl-tRNA synthetase family. The cofactor is Zn(2+).

It is found in the cytoplasm. The catalysed reaction is tRNA(Ala) + L-alanine + ATP = L-alanyl-tRNA(Ala) + AMP + diphosphate. Catalyzes the attachment of alanine to tRNA(Ala) in a two-step reaction: alanine is first activated by ATP to form Ala-AMP and then transferred to the acceptor end of tRNA(Ala). Also edits incorrectly charged Ser-tRNA(Ala) and Gly-tRNA(Ala) via its editing domain. The chain is Alanine--tRNA ligase from Lactobacillus johnsonii (strain CNCM I-12250 / La1 / NCC 533).